A 365-amino-acid chain; its full sequence is C-X-C chemokine receptor type 3 (365 aa).

Over M1–P57 the chain is Extracellular. N22 carries N-linked (GlcNAc...) asparagine glycosylation. 2 positions are modified to sulfotyrosine: Y27 and Y29. An N-linked (GlcNAc...) asparagine glycan is attached at N32. The helical transmembrane segment at A58–L78 threads the bilayer. Topologically, residues C79–T88 are cytoplasmic. The chain crosses the membrane as a helical span at residues D89–W109. Topologically, residues R110 to V126 are extracellular. Residues C124 and C203 are joined by a disulfide bond. A helical membrane pass occupies residues A127 to F147. Residues D148–T169 lie on the Cytoplasmic side of the membrane. The chain crosses the membrane as a helical span at residues L170 to L190. Residues S191–G223 lie on the Extracellular side of the membrane. A helical membrane pass occupies residues F224–V244. Over S245–L256 the chain is Cytoplasmic. The helical transmembrane segment at V257–V277 threads the bilayer. The Extracellular segment spans residues D278–S301. Residues V302–G322 traverse the membrane as a helical segment. Topologically, residues V323 to R365 are cytoplasmic. A disordered region spans residues R342–R365.

The protein belongs to the G-protein coupled receptor 1 family. As to quaternary structure, homomer. Forms heteromers with ACKR4. Interacts with PF4/CXCL4. Post-translationally, sulfation on Tyr-27 and Tyr-29 is essential for CXCL10 binding. In terms of processing, N-glycosylated.

The protein localises to the cell membrane. Functionally, receptor for the C-X-C chemokine CXCL9, CXCL10 and CXCL11 and mediates the proliferation, survival and angiogenic activity of mesangial cells through a heterotrimeric G-protein signaling pathway. Probably promotes cell chemotaxis response. Binds to CCL21. Upon activation by PF4, induces activated T-lymphocytes migration mediated via downstream Ras/extracellular signal-regulated kinase (ERK) signaling. The chain is C-X-C chemokine receptor type 3 (CXCR3) from Canis lupus familiaris (Dog).